We begin with the raw amino-acid sequence, 2892 residues long: Inositol 1,4,5-trisphosphate receptor itr-1 (2892 aa).

Over 1 to 2475 (MNPSYGRVRK…YPLPEHSNSS (2475 aa)) the chain is Cytoplasmic. 4 consecutive MIR domains span residues 192-246 (GNVI…IEPA), 319-379 (QNSV…VQVV), 386-466 (GGTA…LGPT), and 490-551 (NKEV…LLPV). 357 to 361 (RMTNR) is a binding site for 1D-myo-inositol 1,4,5-trisphosphate. 1D-myo-inositol 1,4,5-trisphosphate contacts are provided by residues 625-628 (KLLR) and 689-691 (YRK). Residues 1030–1056 (MMRGGNKENSKDLAKTPSVTAEEAGRT) are disordered. A compositionally biased stretch (basic and acidic residues) spans 1034–1043 (GNKENSKDLA). A helical transmembrane segment spans residues 2476–2496 (ISLGNLYSWFAVFSSFLLAHY). Residues 2497-2514 (LRHDKIYLHKTSLLILAS) are Extracellular-facing. The helical transmembrane segment at 2515–2535 (LCFLLLSSIGVTLTLYIFGIL) threads the bilayer. At 2536–2572 (QLVNKIVHVVAFVSNKGLEDRPIAEILACRNLHYLLV) the chain is on the cytoplasmic side. A helical transmembrane segment spans residues 2573–2593 (YLFICILGLLVHPMIYCILLF). Topologically, residues 2594–2615 (DIIFTEETLQNVIASVTRNYQS) are extracellular. Residues 2616-2636 (IVWTGLLALILLYFFSILGFL) traverse the membrane as a helical segment. Topologically, residues 2637 to 2735 (YFRHDFYLEV…FIWRVAYDMT (99 aa)) are cytoplasmic. Residues 2655-2666 (ATISSGIPSETC) show a composition bias toward polar residues. The disordered stretch occupies residues 2655 to 2685 (ATISSGIPSETCPSEGCPGLQPSEKDDNDDE). A helical transmembrane segment spans residues 2736 to 2756 (FFVVLIVIVLNLIFGVIIDTF). The Extracellular portion of the chain corresponds to 2757 to 2892 (GDLRAEKNEK…RAFMEQFQPR (136 aa)).

This sequence belongs to the InsP3 receptor family. Interacts with myo-1, myo-2, unc-54/myo-4 and nmy-2. Also interacts with iri-1. Isoform a is expressed in the anterior cells of the pharyngeal terminal bulb, vulva, rectal epithelial cells, spicule protractor muscles of the proctodeum and male-specific neuron CP8 or CP9. Isoform d is expressed in the spermatheca, excretory cell, amphid socket cells, PDA motor neuron, spicule retractor muscles, gubernaculum retractor muscles, posterior oblique muscles, diagonal muscles and the vas deferens. Also expressed in the intestine, pharynx, pharyngeal isthmus, pharyngeal intestinal valve, somatic gonad, hypodermal cells of the vulva, uterine sheath cells, tail, head, LUA motor neuron and the embryonic epidermis (at protein level).

Its subcellular location is the endoplasmic reticulum membrane. In terms of biological role, receptor for inositol 1,4,5-trisphosphate, a second messenger that regulates intracellular calcium homeostasis. Binds in vitro to both inositol 1,4,5-trisphosphate (1,4,5-InsP3) and inositol 2,4,5-trisphosphate (2,4,5-InsP3) with high affinity and does not discriminate between the phosphate at 1 or 2 position. Can also bind inositol 1,3,4,5-tetrakisphosphate (1,3,4,5-InsP4) and inositol 4,5-bisphosphate (4,5-InsP2), but with lower affinity. Acts as a timekeeper/rhythm generator via calcium signaling, affecting the defecation cycle and pharyngeal pumping. Affects normal hermaphrodite and male fertility as a participant in intracellular signaling by acting downstream of let-23/lin-3 which regulates ovulation, spermathecal valve dilation and male mating behavior. Important for early embryonic development; controls epidermal cell migration and may also regulate filopodial protrusive activity during epithelial morphogenesis. Component of inositol trisphosphate (IP3)-mediated downstream signaling pathways that controls amphid sensory neuronal (ASH)-mediated response to nose touch and benzaldehyde but not other ASH-mediated responses. Involved in modulating lifespan, acting downstream of transcription factor atf-6. The chain is Inositol 1,4,5-trisphosphate receptor itr-1 from Caenorhabditis elegans.